We begin with the raw amino-acid sequence, 130 residues long: UPF0102 protein SCO5602 (130 aa).

Belongs to the UPF0102 family.

The chain is UPF0102 protein SCO5602 from Streptomyces coelicolor (strain ATCC BAA-471 / A3(2) / M145).